The following is a 618-amino-acid chain: Crinkler effector protein 16 (618 aa).

The N-terminal stretch at 1 to 19 is a signal peptide; the sequence is MVVVSLQCAIVGQAGSSFD. The segment at 18–57 is LQLFLAK domain; the sequence is FDVEIDDGAKVSKLKDAIKAKKPNDFKVVDADKLHLFLAK. Residues 58-139 are DWL domain; the sequence is QPVEDESGKE…NMELPSSEQI (82 aa). Positions 140-146 match the HVLVXXP motif motif; sequence HVLVVVP. N-linked (GlcNAc...) asparagine glycosylation is present at Asn-534.

The protein belongs to the Crinkler effector family.

It localises to the secreted. Its subcellular location is the host nucleus. Functionally, secreted effector that elicits necrosis in host plants, a characteristic of plant innate immunity. In Phytophthora infestans (Potato late blight agent), this protein is Crinkler effector protein 16.